The primary structure comprises 391 residues: Dual-specificity RNA methyltransferase RlmN (391 aa).

The active-site Proton acceptor is Glu112. A Radical SAM core domain is found at 118–368 (ESDRGTLCIS…VRTPRGRDIL (251 aa)). Cys125 and Cys371 are disulfide-bonded. 3 residues coordinate [4Fe-4S] cluster: Cys132, Cys136, and Cys139. S-adenosyl-L-methionine contacts are provided by residues 197–198 (GE), Ser229, 251–253 (SLH), and Asn328. Cys371 functions as the S-methylcysteine intermediate in the catalytic mechanism.

This sequence belongs to the radical SAM superfamily. RlmN family. Requires [4Fe-4S] cluster as cofactor.

Its subcellular location is the cytoplasm. The enzyme catalyses adenosine(2503) in 23S rRNA + 2 reduced [2Fe-2S]-[ferredoxin] + 2 S-adenosyl-L-methionine = 2-methyladenosine(2503) in 23S rRNA + 5'-deoxyadenosine + L-methionine + 2 oxidized [2Fe-2S]-[ferredoxin] + S-adenosyl-L-homocysteine. The catalysed reaction is adenosine(37) in tRNA + 2 reduced [2Fe-2S]-[ferredoxin] + 2 S-adenosyl-L-methionine = 2-methyladenosine(37) in tRNA + 5'-deoxyadenosine + L-methionine + 2 oxidized [2Fe-2S]-[ferredoxin] + S-adenosyl-L-homocysteine. In terms of biological role, specifically methylates position 2 of adenine 2503 in 23S rRNA and position 2 of adenine 37 in tRNAs. m2A2503 modification seems to play a crucial role in the proofreading step occurring at the peptidyl transferase center and thus would serve to optimize ribosomal fidelity. This is Dual-specificity RNA methyltransferase RlmN from Beijerinckia indica subsp. indica (strain ATCC 9039 / DSM 1715 / NCIMB 8712).